Reading from the N-terminus, the 374-residue chain is Flagellar P-ring protein (374 aa).

An N-terminal signal peptide occupies residues 1 to 29 (MSGLGFTGVVRIAVMALLALAFLGAPAHA). Over residues 296 to 311 (ESPQVSQPNPLSNGRT) the composition is skewed to polar residues. The interval 296–316 (ESPQVSQPNPLSNGRTVMTPR) is disordered.

It belongs to the FlgI family. As to quaternary structure, the basal body constitutes a major portion of the flagellar organelle and consists of four rings (L,P,S, and M) mounted on a central rod.

It is found in the periplasm. The protein resides in the bacterial flagellum basal body. Its function is as follows. Assembles around the rod to form the L-ring and probably protects the motor/basal body from shearing forces during rotation. This chain is Flagellar P-ring protein, found in Nitrobacter winogradskyi (strain ATCC 25391 / DSM 10237 / CIP 104748 / NCIMB 11846 / Nb-255).